We begin with the raw amino-acid sequence, 72 residues long: Translation initiation factor IF-1 (72 aa).

One can recognise an S1-like domain in the interval 1-72 (MAKEDVIEVE…TRGRITYRYK (72 aa)). Y60 carries the post-translational modification Phosphotyrosine.

It belongs to the IF-1 family. Component of the 30S ribosomal translation pre-initiation complex which assembles on the 30S ribosome in the order IF-2 and IF-3, IF-1 and N-formylmethionyl-tRNA(fMet); mRNA recruitment can occur at any time during PIC assembly.

The protein resides in the cytoplasm. In terms of biological role, one of the essential components for the initiation of protein synthesis. Stabilizes the binding of IF-2 and IF-3 on the 30S subunit to which N-formylmethionyl-tRNA(fMet) subsequently binds. Helps modulate mRNA selection, yielding the 30S pre-initiation complex (PIC). Upon addition of the 50S ribosomal subunit IF-1, IF-2 and IF-3 are released leaving the mature 70S translation initiation complex. In Shouchella clausii (strain KSM-K16) (Alkalihalobacillus clausii), this protein is Translation initiation factor IF-1.